A 136-amino-acid polypeptide reads, in one-letter code: MNCDALLHHSAIPEDFLHIFLLLQKISVSLPLSLSQSVCLFYSISLCVSLLLHISLCVSVYVSLSLSSFPCFSLTHTHTHSQLSKDTSVLTFTFCFKQHTHFTLNYTSHAHELSAPSVHPTCVFTFKAAPSPRPAT.

The helical transmembrane segment at 40 to 62 (LFYSISLCVSLLLHISLCVSVYV) threads the bilayer.

It localises to the membrane. This is an uncharacterized protein from Homo sapiens (Human).